The following is a 98-amino-acid chain: NADH-ubiquinone oxidoreductase chain 4L (98 aa).

A run of 3 helical transmembrane segments spans residues 1-21 (MSLT…GLLM), 29-49 (SLLC…ITIL), and 61-81 (IILL…LVMV).

Belongs to the complex I subunit 4L family. As to quaternary structure, core subunit of respiratory chain NADH dehydrogenase (Complex I) which is composed of 45 different subunits.

Its subcellular location is the mitochondrion inner membrane. The catalysed reaction is a ubiquinone + NADH + 5 H(+)(in) = a ubiquinol + NAD(+) + 4 H(+)(out). Its function is as follows. Core subunit of the mitochondrial membrane respiratory chain NADH dehydrogenase (Complex I) which catalyzes electron transfer from NADH through the respiratory chain, using ubiquinone as an electron acceptor. Part of the enzyme membrane arm which is embedded in the lipid bilayer and involved in proton translocation. This Artibeus jamaicensis (Jamaican fruit-eating bat) protein is NADH-ubiquinone oxidoreductase chain 4L (MT-ND4L).